We begin with the raw amino-acid sequence, 507 residues long: ATP synthase subunit alpha (507 aa).

169 to 176 (GDRQTGKT) contacts ATP.

The protein belongs to the ATPase alpha/beta chains family. In terms of assembly, F-type ATPases have 2 components, CF(1) - the catalytic core - and CF(0) - the membrane proton channel. CF(1) has five subunits: alpha(3), beta(3), gamma(1), delta(1), epsilon(1). CF(0) has three main subunits: a(1), b(2) and c(9-12). The alpha and beta chains form an alternating ring which encloses part of the gamma chain. CF(1) is attached to CF(0) by a central stalk formed by the gamma and epsilon chains, while a peripheral stalk is formed by the delta and b chains.

Its subcellular location is the cell membrane. It carries out the reaction ATP + H2O + 4 H(+)(in) = ADP + phosphate + 5 H(+)(out). In terms of biological role, produces ATP from ADP in the presence of a proton gradient across the membrane. The alpha chain is a regulatory subunit. The protein is ATP synthase subunit alpha of Desulforudis audaxviator (strain MP104C).